A 259-amino-acid polypeptide reads, in one-letter code: Bisphosphoglycerate mutase (259 aa).

Ser2 carries the post-translational modification N-acetylserine. Residues 10–17, 23–24, Arg62, 89–92, Arg100, and 116–117 contribute to the substrate site; these read RHGEGAWN, CS, ERHY, and RR. Residue His11 is the Tele-phosphohistidine intermediate of the active site. The Proton donor/acceptor role is filled by Glu89. Phosphothreonine is present on Thr122. 189–190 lines the substrate pocket; sequence GN.

This sequence belongs to the phosphoglycerate mutase family. BPG-dependent PGAM subfamily. As to quaternary structure, homodimer.

It catalyses the reaction (2R)-3-phospho-glyceroyl phosphate = (2R)-2,3-bisphosphoglycerate + H(+). The enzyme catalyses (2R)-2-phosphoglycerate = (2R)-3-phosphoglycerate. At alkaline pH BPGM favors the synthase reaction; however, at lower pH the phosphatase reaction is dominant. Inhibited by citrate. Plays a major role in regulating hemoglobin oxygen affinity by controlling the levels of its allosteric effector 2,3-bisphosphoglycerate (2,3-BPG). Also exhibits mutase (EC 5.4.2.11) activity. This is Bisphosphoglycerate mutase (BPGM) from Bos taurus (Bovine).